Reading from the N-terminus, the 288-residue chain is Mycothiol S-conjugate amidase (288 aa).

Residues histidine 12, aspartate 15, and histidine 142 each contribute to the Zn(2+) site.

This sequence belongs to the MshB deacetylase family. Mca subfamily. Monomer. Zn(2+) is required as a cofactor.

It catalyses the reaction mycothiol S-conjugate + H2O = an N-acetyl-L-cysteine-S-conjugate + 1D-myo-inositol 2-amino-2-deoxy-alpha-D-glucopyranoside. Its activity is regulated as follows. Partially inhibited by MSH when MSmB is used as substrate. Competitively inhibited by the GlcNAc-cyclohexyl derivative 5-(4-chlorophenyl)-N-((2R,3R,4R,5S,6R)-2-(cyclohexylthio)-tetrahydro-4,5-dihydroxy-6-(hydroxymethyl)-2H-pyran-3-yl)furan-2-carboxamide, which also inhibits MshB. A mycothiol (MSH, N-acetyl-cysteinyl-glucosaminyl-inositol) S-conjugate amidase, it recycles conjugated MSH to the N-acetyl cysteine conjugate and the MSH precursor. Involved in MSH-dependent detoxification of a number of alkylating agents and antibiotics. Activity is specific for the mycothiol moiety. Has a low but measurable deacetylation activity on GlcNAc-Ins (N-acetyl-glucosaminyl-inositol), and thus can also directly contribute to the production of MSH. The protein is Mycothiol S-conjugate amidase of Mycobacterium tuberculosis (strain ATCC 25618 / H37Rv).